The following is a 250-amino-acid chain: NAD(P)H-quinone oxidoreductase subunit K, chloroplastic (250 aa).

Residues cysteine 67, cysteine 68, cysteine 132, and cysteine 163 each contribute to the [4Fe-4S] cluster site.

The protein belongs to the complex I 20 kDa subunit family. NDH is composed of at least 16 different subunits, 5 of which are encoded in the nucleus. It depends on [4Fe-4S] cluster as a cofactor.

The protein localises to the plastid. The protein resides in the chloroplast thylakoid membrane. It carries out the reaction a plastoquinone + NADH + (n+1) H(+)(in) = a plastoquinol + NAD(+) + n H(+)(out). The enzyme catalyses a plastoquinone + NADPH + (n+1) H(+)(in) = a plastoquinol + NADP(+) + n H(+)(out). Functionally, NDH shuttles electrons from NAD(P)H:plastoquinone, via FMN and iron-sulfur (Fe-S) centers, to quinones in the photosynthetic chain and possibly in a chloroplast respiratory chain. The immediate electron acceptor for the enzyme in this species is believed to be plastoquinone. Couples the redox reaction to proton translocation, and thus conserves the redox energy in a proton gradient. The protein is NAD(P)H-quinone oxidoreductase subunit K, chloroplastic of Adiantum capillus-veneris (Maidenhair fern).